The primary structure comprises 264 residues: MTATAQILPNTLEQNSDNISKKPLLGVNVDHVATLRQARGVSYPSPLAAALLCEKAGADGITIHLREDRRHIQDADVYEMAGQLTTRMNLEMAATTEMLEIACRVKPYWVCLVPEKRAELTTEGGLDVAGQLDLLKDYVAKLQAAGIKVSLFIDPEDKQINAAVTCGADAIELHTGSYAEAGLAGDIEKGSVELERIKTAVITAKRIDSKLLVNAGHGLTHDNVNAIAQIDGIYELNIGHALIADALFVGIEQAVIMMKIAMHR.

Asn-28 is a binding site for 3-amino-2-oxopropyl phosphate. 30–31 (DH) lines the 1-deoxy-D-xylulose 5-phosphate pocket. Arg-39 contributes to the 3-amino-2-oxopropyl phosphate binding site. The active-site Proton acceptor is His-64. The 1-deoxy-D-xylulose 5-phosphate site is built by Arg-66 and His-71. The active-site Proton acceptor is Glu-91. 1-deoxy-D-xylulose 5-phosphate is bound at residue Thr-121. Residue His-217 is the Proton donor of the active site. 3-amino-2-oxopropyl phosphate is bound by residues Gly-218 and 239-240 (GH).

Belongs to the PNP synthase family. Homooctamer; tetramer of dimers.

The protein localises to the cytoplasm. The enzyme catalyses 3-amino-2-oxopropyl phosphate + 1-deoxy-D-xylulose 5-phosphate = pyridoxine 5'-phosphate + phosphate + 2 H2O + H(+). It participates in cofactor biosynthesis; pyridoxine 5'-phosphate biosynthesis; pyridoxine 5'-phosphate from D-erythrose 4-phosphate: step 5/5. Its function is as follows. Catalyzes the complicated ring closure reaction between the two acyclic compounds 1-deoxy-D-xylulose-5-phosphate (DXP) and 3-amino-2-oxopropyl phosphate (1-amino-acetone-3-phosphate or AAP) to form pyridoxine 5'-phosphate (PNP) and inorganic phosphate. The polypeptide is Pyridoxine 5'-phosphate synthase (Psychrobacter arcticus (strain DSM 17307 / VKM B-2377 / 273-4)).